Reading from the N-terminus, the 1335-residue chain is Regulatory-associated protein of mTOR (1335 aa).

Phosphoserine occurs at positions 44 and 122. Serine 696 is subject to Phosphoserine; by MAPK8. An O-linked (GlcNAc) threonine glycan is attached at threonine 700. A Phosphothreonine; by MAPK8 modification is found at threonine 706. Phosphoserine; by RPS6KA1 is present on residues serine 719 and serine 721. Position 722 is a phosphoserine; by AMPK and RPS6KA1 (serine 722). Position 738 is a phosphoserine (serine 738). Serine 791 bears the Phosphoserine; by PKA mark. Serine 792 bears the Phosphoserine; by AMPK mark. 2 positions are modified to phosphoserine: serine 836 and serine 855. Positions 850-943 (VLDTSSLTQS…PEQTADDADD (94 aa)) are disordered. Residues 851–866 (LDTSSLTQSAPASPTN) are compositionally biased toward polar residues. Serine 859 carries the phosphoserine; by MTOR modification. Serine 863 bears the Phosphoserine; by MAPK8, MTOR and NLK mark. Residue threonine 865 is modified to Phosphothreonine. Residues 874–887 (AGGSPPASSTSSSS) are compositionally biased toward low complexity. The residue at position 877 (serine 877) is a Phosphoserine; by TBK1. Residues lysine 932 and lysine 948 each participate in a glycyl lysine isopeptide (Lys-Gly) (interchain with G-Cter in ubiquitin) cross-link. Phosphoserine is present on serine 982. WD repeat units lie at residues 1020–1061 (NRNP…DYFH), 1065–1106 (PRYT…EKNP), 1121–1160 (TTRG…KVQD), 1164–1203 (GADS…SECR), 1209–1249 (EHTA…SVNV), 1251–1291 (QIVK…NNIK), and 1299–1335 (QRVG…KRVR). An N6-acetyllysine modification is found at lysine 1097.

The protein belongs to the WD repeat RAPTOR family. As to quaternary structure, part of the mechanistic target of rapamycin complex 1 (mTORC1) which contains MTOR, MLST8 and RPTOR. mTORC1 associates with AKT1S1/PRAS40, which inhibits its activity. mTORC1 associates with DEPTOR, which regulates its activity. mTORC1 binds to and is inhibited by FKBP12-rapamycin. Forms a complex with MTOR under both leucine-rich and -poor conditions. Interacts with (via TOS motifs) EIF4EBP1 and RPS6KB1; interaction is independent of its association with MTOR. Binds preferentially to poorly or non-phosphorylated forms of EIF4EBP1, and this binding is critical to the ability of MTOR to catalyze phosphorylation. Interacts with ULK1 in a nutrient-dependent manner; the interaction is reduced during starvation. Interacts with GTP-bound form of RagA/RRAGA or RagB/RRAGB and GDP-bound form of RagC/RRAGC or RagD/RRAGD, promoting recruitment of mTORC1 to the lysosomes. Interacts (when phosphorylated by AMPK) with 14-3-3 protein, leading to inhibition of its activity. Interacts with SPAG5; SPAG5 competes with MTOR for RPTOR-binding, resulting in decreased mTORC1 formation. Interacts with WAC; WAC positively regulates MTOR activity by promoting the assembly of the TTT complex composed of TELO2, TTI1 and TTI2 and the RUVBL complex composed of RUVBL1 and RUVBL2 into the TTT-RUVBL complex which leads to the dimerization of the mTORC1 complex and its subsequent activation. Interacts with G3BP1. The complex formed with G3BP1 and SPAG5 is increased by oxidative stress. Interacts with HTR6. Interacts with PIH1D1. Interacts with LARP1. Interacts with BRAT1. Interacts with SIK3. Interacts with SLC38A7; this interaction mediates the recruitment of mTORC1 to the lysosome and its subsequent activation. In terms of assembly, (Microbial infection) Interacts with vaccinia virus protein F17; this interaction dysregulates mTOR. Insulin-stimulated phosphorylation at Ser-863 by MTOR and MAPK8 regulates mTORC1 activity. Phosphorylated at Ser-863 by NLK in response to stress, disrupting the interaction with small GTPases Rag (RagA/RRAGA, RagB/RRAGB, RagC/RRAGC and/or RagD/RRAGD), thereby preventing lysosome recruitment and activation of the mTORC1 complex. Osmotic stress also induces phosphorylation at Ser-696, Thr-706 and Ser-863 by MAPK8. Ser-863 phosphorylation is required for phosphorylation at Ser-855 and Ser-859. In response to nutrient limitation, phosphorylated at Ser-722 and Ser-792 by AMPK; phosphorylation promotes interaction with 14-3-3 proteins, leading to negative regulation of the mTORC1 complex. Phosphorylation at Ser-722 and Ser-792 by AMPK in response to glucose starvation inhibits O-GlcNAcylation by OGT and subsequent activation of mTORC1. In response to growth factors, phosphorylated at Ser-719, Ser-721 and Ser-722 by RPS6KA1, which stimulates mTORC1 activity. Phosphorylation at Ser-791 by PKA downstream of cAMP inhibits the mTORC1 complex. Phosphorylated at Ser-877 by TBK1, leading to negative regulation of the mTORC1 complex. Post-translationally, O-GlcNAcylated by OGT upon glucose sufficiency, promoting interaction with small GTPases Rag (RagA/RRAGA, RagB/RRAGB, RagC/RRAGC and/or RagD/RRAGD) and subsequent recruitment of mTORC1 to lysosomal membranes, leading to activation of the mTORC1 complex. Phosphorylation at Ser-722 and Ser-792 by AMPK in response to glucose starvation inhibits O-GlcNAcylation. In terms of processing, acetylation at Lys-1097 by EP300/p300 in response to leucine metabolite acetyl-coA promotes its activity, leading to activation of the mTORC1 complex. Acetylation is decreased in response to fasting. Ubiquitinated, leading to its degradation by the proteasome. Deubiquitinated by OTUB1 via a non-catalytic mechanism. Ubiquitinated by an E3 ubiquitin ligase complex containing VHL. As to expression, highly expressed in skeletal muscle, and in a lesser extent in brain, lung, small intestine, kidney and placenta. In terms of tissue distribution, widely expressed, with highest levels in nasal mucosa and pituitary and lowest in spleen.

Its subcellular location is the lysosome membrane. It is found in the cytoplasm. The protein localises to the cytoplasmic granule. Its function is as follows. Component of the mechanistic target of rapamycin complex 1 (mTORC1), an evolutionarily conserved central nutrient sensor that stimulates anabolic reactions and macromolecule biosynthesis to promote cellular biomass generation and growth. In response to nutrients, growth factors or amino acids, mTORC1 is recruited to the lysosome membrane and promotes protein, lipid and nucleotide synthesis by phosphorylating several substrates, such as ribosomal protein S6 kinase (RPS6KB1 and RPS6KB2) and EIF4EBP1 (4E-BP1). In the same time, it inhibits catabolic pathways by phosphorylating the autophagy initiation components ULK1 and ATG13, as well as transcription factor TFEB, a master regulators of lysosomal biogenesis and autophagy. The mTORC1 complex is inhibited in response to starvation and amino acid depletion. Within the mTORC1 complex, RPTOR acts both as a molecular adapter, which (1) mediates recruitment of mTORC1 to lysosomal membranes via interaction with small GTPases Rag (RagA/RRAGA, RagB/RRAGB, RagC/RRAGC and/or RagD/RRAGD), and a (2) substrate-specific adapter, which promotes substrate specificity by binding to TOS motif-containing proteins and direct them towards the active site of the MTOR kinase domain for phosphorylation. mTORC1 complex regulates many cellular processes, such as odontoblast and osteoclast differentiation or neuronal transmission. mTORC1 complex in excitatory neuronal transmission is required for the prosocial behavior induced by the psychoactive substance lysergic acid diethylamide (LSD). In Homo sapiens (Human), this protein is Regulatory-associated protein of mTOR.